A 215-amino-acid polypeptide reads, in one-letter code: Chymomexicain (215 aa).

3 cysteine pairs are disulfide-bonded: cysteine 22–cysteine 63, cysteine 56–cysteine 96, and cysteine 154–cysteine 201. Cysteine 25 is an active-site residue. Active-site residues include histidine 160 and asparagine 176.

The protein belongs to the peptidase C1 family.

In terms of biological role, cysteine protease. This Jacaratia mexicana (Wild papaya) protein is Chymomexicain.